The following is a 1334-amino-acid chain: Nck-associated protein 5-like (1334 aa).

5 disordered regions span residues 1–28 (MSEAMDQPAGGPGNPRPGEGDDGSMEPG), 115–146 (LPQIPLTPLQPPSEPPASPSLSSTEGPAAPLP), 210–234 (TPWRPPGQGPGSPEPINGELCGPPQ), 266–316 (GEED…SPDT), and 349–711 (PLNG…MVPS). A mediates interaction with CDK5RAP2 and is required for homodimerization and microtubule bundle formation region spans residues 1–139 (MSEAMDQPAG…PASPSLSSTE (139 aa)). Residues 28–106 (GTCQELLHRL…NQMLSALFQQ (79 aa)) adopt a coiled-coil conformation. Residues 122–132 (PLQPPSEPPAS) are compositionally biased toward pro residues. Polar residues predominate over residues 358–372 (GQSSSPDQAPPQLSK). S440, S451, S470, and S477 each carry phosphoserine; by CDK1. Low complexity predominate over residues 468–481 (SPSPGGPQLSPQLP). The short motif at 484-487 (SRIP) is the (S/T)X(I/L)P motif 1 element. S493, S496, and S498 each carry phosphoserine. Residues 519–547 (LPTSPSPCYTTPDSTQLRPPQSALSTTLS) are compositionally biased toward polar residues. 2 positions are modified to phosphoserine; by CDK1: S571 and S577. A compositionally biased stretch (polar residues) spans 638–649 (PGNSSKKPSQGS). T659 carries the phosphothreonine modification. The mediates interaction with beta-tubulin and is required for microtubule bundle formation stretch occupies residues 750–1146 (RVYSSHSMGA…SGTPSKNLPK (397 aa)). S767 bears the Phosphoserine; by CDK1 mark. The tract at residues 782-884 (LAGALCPQVP…EGLAPHSAIE (103 aa)) is disordered. The segment covering 810 to 825 (SPHSSPTKLPSKSPTK) has biased composition (low complexity). The (S/T)X(I/L)P motif 2 signature appears at 816-819 (TKLP). The (S/T)X(I/L)P motif 3; required for interaction with MAPRE1 motif lies at 926 to 929 (SKLP). 3 disordered regions span residues 931-953 (LNRRTEATKNKEGAGGGSPLRRE), 986-1015 (KAYLSSRARPRPGGPAPGPNTGLGQVQGQL), and 1030-1183 (LNRV…VPGI). Residues 933–942 (RRTEATKNKE) are compositionally biased toward basic and acidic residues. Residues 956–994 (MEARKLEAESLNISKLMAKAEDLRRALEEEKAYLSSRAR) adopt a coiled-coil conformation. The span at 1033 to 1050 (VDGKELPSKSWREPKPEY) shows a compositional bias: basic and acidic residues. Over residues 1079–1090 (GCGKPPGKPSSE) the composition is skewed to low complexity. Over residues 1110–1122 (SHFTACGSLTRTL) the composition is skewed to polar residues. Pro residues predominate over residues 1152 to 1167 (LDPPPGVPPARPPPLT). S1194 carries the phosphoserine modification. The span at 1197–1206 (AFPALLPAAP) shows a compositional bias: low complexity. A disordered region spans residues 1197–1334 (AFPALLPAAP…DSLSSCGSQG (138 aa)). Positions 1235 to 1247 (TFPNTRAAGSSSD) are enriched in polar residues. Low complexity predominate over residues 1313 to 1334 (LETSESLSDSLYDSLSSCGSQG).

As to quaternary structure, homodimer. Interacts with CDK5RAP2. Interacts with MAPRE1. Interacts with beta-tubulin. CDK1/Cyclin B-dependent phosphorylation mediates its dissociation from centrosomes during mitosis.

It is found in the cytoplasm. Its subcellular location is the cytoskeleton. The protein localises to the microtubule organizing center. The protein resides in the centrosome. Its function is as follows. Regulates microtubule organization and stabilization. Promotes microtubule growth and bundling formation and stabilizes microtubules by increasing intense acetylation of microtubules. Both tubulin-binding and homodimer formation are required for NCKAP5L-mediated microtubule bundle formation. In Homo sapiens (Human), this protein is Nck-associated protein 5-like.